Consider the following 337-residue polypeptide: Autophagy protein 5 (337 aa).

A Glycyl lysine isopeptide (Lys-Gly) (interchain with G-Cter in ATG12) cross-link involves residue Lys128. The tract at residues 271 to 290 is disordered; that stretch reads RAQTSGEERSIDDTEEADGS. Basic and acidic residues predominate over residues 276-290; it reads GEERSIDDTEEADGS.

It belongs to the ATG5 family. In terms of assembly, conjugated to ATG12. Post-translationally, conjugated to ATG12; which is essential for autophagy. Conjugation with ATG12 involves ATG7 as an E1-like activating enzyme and ATG10 as an E2-like conjugating enzyme. In terms of tissue distribution, ubiquitous.

The protein resides in the cytoplasm. In terms of biological role, required for autophagy. Conjugation to ATG12 is essential for plant nutrient recycling. Involved in a negative feedback loop that modulates NPR1-dependent salicylic acid (SA) signaling and limits senescence and immunity-related programmed cell death (PCD) in plants. Involved in complete proteolysis of chloroplast stroma proteins in senescent leaves. Involved in the degradation of damaged peroxisomes. This is Autophagy protein 5 from Arabidopsis thaliana (Mouse-ear cress).